Consider the following 734-residue polypeptide: Photosystem I P700 chlorophyll a apoprotein A2 (734 aa).

8 helical membrane passes run 46–69 (IFASHFGQLAIIFLWTSGNLFHVA), 135–158 (LYTGALFLLFLSALSLIGGWLHLQ), 175–199 (LNHHLSGLFGVSSLAWTGHLVHVAI), 273–291 (MAHHHLAIAILFLIAGHMY), 330–353 (IHFQLGLALASLGVITSLVAQHMY), 369–395 (AALYTHHQYIAGFIMTGAFAHGAIFFI), 417–439 (AIISHLSWASLFLGFHTLGLYVH), and 517–535 (FLVHHAIALGLHTTTLILV). Residues C559 and C568 each coordinate [4Fe-4S] cluster. 2 helical membrane-spanning segments follow: residues 575–596 (AFYLAVFWMLNTIGWVTFYWHW) and 643–665 (LSVWAWMFLFGHLVWATGFMFLI). Chlorophyll a-binding residues include H654, M662, and Y670. W671 provides a ligand contact to phylloquinone. A helical membrane pass occupies residues 707-727 (LVGLAHFSVGYIFTYAAFLIA).

This sequence belongs to the PsaA/PsaB family. The PsaA/B heterodimer binds the P700 chlorophyll special pair and subsequent electron acceptors. PSI consists of a core antenna complex that captures photons, and an electron transfer chain that converts photonic excitation into a charge separation. The eukaryotic PSI reaction center is composed of at least 11 subunits. P700 is a chlorophyll a/chlorophyll a' dimer, A0 is one or more chlorophyll a, A1 is one or both phylloquinones and FX is a shared 4Fe-4S iron-sulfur center. is required as a cofactor.

It is found in the plastid. Its subcellular location is the chloroplast thylakoid membrane. It catalyses the reaction reduced [plastocyanin] + hnu + oxidized [2Fe-2S]-[ferredoxin] = oxidized [plastocyanin] + reduced [2Fe-2S]-[ferredoxin]. Its function is as follows. PsaA and PsaB bind P700, the primary electron donor of photosystem I (PSI), as well as the electron acceptors A0, A1 and FX. PSI is a plastocyanin-ferredoxin oxidoreductase, converting photonic excitation into a charge separation, which transfers an electron from the donor P700 chlorophyll pair to the spectroscopically characterized acceptors A0, A1, FX, FA and FB in turn. Oxidized P700 is reduced on the lumenal side of the thylakoid membrane by plastocyanin. The sequence is that of Photosystem I P700 chlorophyll a apoprotein A2 from Arabis hirsuta (Hairy rock-cress).